The primary structure comprises 577 residues: CTP synthase (577 aa).

Positions 1–268 (MDPAFIFITG…GALLCERLRL (268 aa)) are amidoligase domain. CTP is bound at residue serine 14. Residue serine 14 coordinates UTP. 15-20 (SLGKGI) lines the ATP pocket. Tyrosine 55 provides a ligand contact to L-glutamine. Aspartate 72 contributes to the ATP binding site. Positions 72 and 142 each coordinate Mg(2+). CTP-binding positions include 149–151 (DIE), 189–194 (KTKPLQ), and lysine 225. Residues 189-194 (KTKPLQ) and lysine 225 each bind UTP. Residues 333–575 (TVALVGKYVS…VAAGLERKDS (243 aa)) form the Glutamine amidotransferase type-1 domain. Glycine 396 contributes to the L-glutamine binding site. Cysteine 423 acts as the Nucleophile; for glutamine hydrolysis in catalysis. Residues 424–427 (LGMQ), glutamate 447, and arginine 503 contribute to the L-glutamine site. Residues histidine 548 and glutamate 550 contribute to the active site.

The protein belongs to the CTP synthase family. In terms of assembly, homotetramer.

It catalyses the reaction UTP + L-glutamine + ATP + H2O = CTP + L-glutamate + ADP + phosphate + 2 H(+). It carries out the reaction L-glutamine + H2O = L-glutamate + NH4(+). The enzyme catalyses UTP + NH4(+) + ATP = CTP + ADP + phosphate + 2 H(+). Its pathway is pyrimidine metabolism; CTP biosynthesis via de novo pathway; CTP from UDP: step 2/2. Its activity is regulated as follows. Allosterically activated by GTP, when glutamine is the substrate; GTP has no effect on the reaction when ammonia is the substrate. The allosteric effector GTP functions by stabilizing the protein conformation that binds the tetrahedral intermediate(s) formed during glutamine hydrolysis. Inhibited by the product CTP, via allosteric rather than competitive inhibition. Its function is as follows. Catalyzes the ATP-dependent amination of UTP to CTP with either L-glutamine or ammonia as the source of nitrogen. Regulates intracellular CTP levels through interactions with the four ribonucleotide triphosphates. This is CTP synthase from Treponema pallidum (strain Nichols).